We begin with the raw amino-acid sequence, 469 residues long: Serine carboxypeptidase-like 41 (469 aa).

Positions 1–20 are cleaved as a signal peptide; sequence MAIVSLRDVAMVMVTVQVFA. 3 disulfide bridges follow: Cys83/Cys342, Cys243/Cys260, and Cys285/Cys310. Asn134 carries N-linked (GlcNAc...) asparagine glycosylation. The active site involves Ser175. N-linked (GlcNAc...) asparagine glycosylation is present at Asn255. 2 N-linked (GlcNAc...) asparagine glycosylation sites follow: Asn331 and Asn347. Active-site residues include Asp379 and His436. N-linked (GlcNAc...) asparagine glycosylation is present at Asn461.

Belongs to the peptidase S10 family. As to expression, expressed in flowers.

The protein localises to the secreted. Probable carboxypeptidase. The polypeptide is Serine carboxypeptidase-like 41 (SCPL41) (Arabidopsis thaliana (Mouse-ear cress)).